Consider the following 216-residue polypeptide: Phosphatidylserine decarboxylase proenzyme (216 aa).

Serine 182 (schiff-base intermediate with substrate; via pyruvic acid) is an active-site residue. Serine 182 carries the pyruvic acid (Ser); by autocatalysis modification.

Belongs to the phosphatidylserine decarboxylase family. PSD-A subfamily. Heterodimer of a large membrane-associated beta subunit and a small pyruvoyl-containing alpha subunit. It depends on pyruvate as a cofactor. Is synthesized initially as an inactive proenzyme. Formation of the active enzyme involves a self-maturation process in which the active site pyruvoyl group is generated from an internal serine residue via an autocatalytic post-translational modification. Two non-identical subunits are generated from the proenzyme in this reaction, and the pyruvate is formed at the N-terminus of the alpha chain, which is derived from the carboxyl end of the proenzyme. The post-translation cleavage follows an unusual pathway, termed non-hydrolytic serinolysis, in which the side chain hydroxyl group of the serine supplies its oxygen atom to form the C-terminus of the beta chain, while the remainder of the serine residue undergoes an oxidative deamination to produce ammonia and the pyruvoyl prosthetic group on the alpha chain.

The protein localises to the cell membrane. The enzyme catalyses a 1,2-diacyl-sn-glycero-3-phospho-L-serine + H(+) = a 1,2-diacyl-sn-glycero-3-phosphoethanolamine + CO2. Its pathway is phospholipid metabolism; phosphatidylethanolamine biosynthesis; phosphatidylethanolamine from CDP-diacylglycerol: step 2/2. Functionally, catalyzes the formation of phosphatidylethanolamine (PtdEtn) from phosphatidylserine (PtdSer). This chain is Phosphatidylserine decarboxylase proenzyme, found in Burkholderia mallei (strain NCTC 10247).